Consider the following 128-residue polypeptide: Large ribosomal subunit protein bL19 (128 aa).

Belongs to the bacterial ribosomal protein bL19 family.

This protein is located at the 30S-50S ribosomal subunit interface and may play a role in the structure and function of the aminoacyl-tRNA binding site. The polypeptide is Large ribosomal subunit protein bL19 (Bradyrhizobium sp. (strain ORS 278)).